The chain runs to 490 residues: Serine/threonine-protein kinase BSK6 (490 aa).

G2 carries N-myristoyl glycine lipidation. S25 bears the Phosphoserine mark. The 255-residue stretch at 56–310 folds into the Protein kinase domain; it reads DNIVSEHGEK…KSLVTSLVTL (255 aa). ATP-binding positions include 62–70 and K84; that span reads HGEKAPNVV. Catalysis depends on D178, which acts as the Proton acceptor. Residue S373 is modified to Phosphoserine.

Belongs to the protein kinase superfamily. Ser/Thr protein kinase family. As to quaternary structure, interacts with BRI1, ASK7/BIN2, ASK9/BIL2, BSK1, BSK5, BSK8 and BSK11. Post-translationally, phosphorylated by BRI1, ASK7/BIN2 and ASK9/BIL2.

It is found in the cell membrane. It catalyses the reaction L-seryl-[protein] + ATP = O-phospho-L-seryl-[protein] + ADP + H(+). The catalysed reaction is L-threonyl-[protein] + ATP = O-phospho-L-threonyl-[protein] + ADP + H(+). Its function is as follows. Probable serine/threonine kinase that acts as a positive regulator of brassinosteroid (BR) signaling downstream of the receptor kinase BRI1. Functions redundantly with BSK3, BSK4, BSK7 and BSK8. The sequence is that of Serine/threonine-protein kinase BSK6 from Arabidopsis thaliana (Mouse-ear cress).